We begin with the raw amino-acid sequence, 975 residues long: Kinesin heavy chain (975 aa).

The region spanning Ser12–Val333 is the Kinesin motor domain. Gly92 to Thr99 lines the ATP pocket. The tract at residues Val180 to Lys321 is microtubule-binding. A coiled-coil region spans residues Asn335–Lys931. Residues Val810 to Cys891 are necessary for associating with milt. Residues His932–Ser975 are globular.

It belongs to the TRAFAC class myosin-kinesin ATPase superfamily. Kinesin family. Kinesin subfamily. In terms of assembly, oligomer composed of two heavy chains and two light chains.

It localises to the cytoplasm. It is found in the cytoskeleton. Its function is as follows. Kinesin is a microtubule-associated force-producing protein that may play a role in organelle transport. Milt and Miro form an essential protein complex that links Khc to mitochondria for light chain-independent, anterograde transport of mitochondria. In Drosophila melanogaster (Fruit fly), this protein is Kinesin heavy chain (Khc).